A 367-amino-acid polypeptide reads, in one-letter code: DNA replication and repair protein RecF (367 aa).

30–37 (GANGSGKT) serves as a coordination point for ATP.

This sequence belongs to the RecF family.

It is found in the cytoplasm. In terms of biological role, the RecF protein is involved in DNA metabolism; it is required for DNA replication and normal SOS inducibility. RecF binds preferentially to single-stranded, linear DNA. It also seems to bind ATP. This Pseudomonas syringae pv. syringae (strain B728a) protein is DNA replication and repair protein RecF.